Reading from the N-terminus, the 388-residue chain is Acetate kinase (388 aa).

Asn8 serves as a coordination point for Mg(2+). Lys15 contributes to the ATP binding site. Arg88 contacts substrate. The active-site Proton donor/acceptor is Asp144. Residues 202–206, 276–278, and 321–325 contribute to the ATP site; these read HLGNG, DMR, and GVGEN. Glu375 is a binding site for Mg(2+).

The protein belongs to the acetokinase family. In terms of assembly, homodimer. Requires Mg(2+) as cofactor. The cofactor is Mn(2+).

The protein localises to the cytoplasm. It carries out the reaction acetate + ATP = acetyl phosphate + ADP. The protein operates within metabolic intermediate biosynthesis; acetyl-CoA biosynthesis; acetyl-CoA from acetate: step 1/2. In terms of biological role, catalyzes the formation of acetyl phosphate from acetate and ATP. Can also catalyze the reverse reaction. The protein is Acetate kinase of Mycoplasmoides gallisepticum (strain R(low / passage 15 / clone 2)) (Mycoplasma gallisepticum).